The following is a 494-amino-acid chain: Trigger factor (494 aa).

Residues G169–V254 enclose the PPIase FKBP-type domain. A disordered region spans residues L440 to E494.

The protein belongs to the FKBP-type PPIase family. Tig subfamily.

The protein localises to the cytoplasm. It catalyses the reaction [protein]-peptidylproline (omega=180) = [protein]-peptidylproline (omega=0). Involved in protein export. Acts as a chaperone by maintaining the newly synthesized protein in an open conformation. Functions as a peptidyl-prolyl cis-trans isomerase. This is Trigger factor from Rhizobium etli (strain ATCC 51251 / DSM 11541 / JCM 21823 / NBRC 15573 / CFN 42).